Reading from the N-terminus, the 952-residue chain is MNNKVNTRDFIVVKGARENNLKNVDIDIPKNKFVVMTGLSGSGKSSLAFDTIYAEGQRRYLESLSSYARQFLGGNEKPDVDSIEGLSPAISIDQKTTSHNPRSTVGTVTEIYDYLRLLFSRIGKPYCPNGHGLISTLSIKQMIDTVYENKEESKIQILSPIISQEKGTFKNKIEELKRQGYLRLRIDGNIYSLDDEIELEKTKKHNIDILIDRIILNNDTVTRSRIYDAIEKSVKEANGKVIVLVDDKELFFSQNHACNECGFSIPELEPRFFSFNSPVGACKSCNGIGFNFLPDTAKIVPDPSLSIKEGAIAYFRSVMMTPTMDLKREMSVWKEHDINLDVPFKELSKKEKNIIFYGDEDIGELKIDVNEQSIYSSSSFLYNNGLVNLIMRRFSETQSERAREYYEKFMSNLSCPSCNGQKLSIEALSVKINNKNIIDLTEKNINDLTNFFIELELNETDRNIAHLALKEIVDRLSFLENVGLNYLTLSRSASTLSGGESQRIRLATQIGSSLTGVLYVLDEPSIGLHQKDNEKLIETLKKMRDLGNTLIVVEHDEDTIRASDYLIDIGPKAGDFGGEVVAAGTVSEVSENKKSITAQYLSGKLKIEVPSKRRHGNGKTIELVGASGNNLKNVTVSFPLNKLIAVTGVSGSGKSTLINETLIKGIEKKLTNPFIVPAPFKDIKGLKNVDKIIKVSQDPIGRTPRSNPATYVSVFDDIRDLFANTKEAKARGFQKGRFSFNVSGGRCENCSGDGLIKIEMHFLPDVFVKCESCNGKKYNQETLQVLYKGKSIYDVLEMSVVEARDFFYEIPEIKRKLDLMVEVGIDYLKLGTSSTHLSGGEAQRIKLAKYLQKRATGKTIYVLDEPTTGLHIHDIAKLITVLNRIVDNGDTVIVVEHNLDLIKCADYVIDLGPDGGINGGQLVAYGTPEEIIEKKAVSYTGLFLEKNMYKDK.

An ATP-binding site is contributed by 38–45 (GLSGSGKS). The C4-type zinc finger occupies 258-285 (CNECGFSIPELEPRFFSFNSPVGACKSC). 2 consecutive ABC transporter domains span residues 315–596 (FRSV…KKSI) and 616–945 (GNGK…LFLE). 648–655 (GVSGSGKS) is a binding site for ATP. Residues 747 to 773 (CENCSGDGLIKIEMHFLPDVFVKCESC) form a C4-type zinc finger.

Belongs to the ABC transporter superfamily. UvrA family. In terms of assembly, forms a heterotetramer with UvrB during the search for lesions.

The protein localises to the cytoplasm. The UvrABC repair system catalyzes the recognition and processing of DNA lesions. UvrA is an ATPase and a DNA-binding protein. A damage recognition complex composed of 2 UvrA and 2 UvrB subunits scans DNA for abnormalities. When the presence of a lesion has been verified by UvrB, the UvrA molecules dissociate. This Malacoplasma penetrans (strain HF-2) (Mycoplasma penetrans) protein is UvrABC system protein A.